We begin with the raw amino-acid sequence, 343 residues long: Anthranilate phosphoribosyltransferase (343 aa).

5-phospho-alpha-D-ribose 1-diphosphate contacts are provided by residues Gly78, 81 to 82 (GD), Thr86, 88 to 91 (NIST), 106 to 114 (KHGNRSVSS), and Ser118. Gly78 provides a ligand contact to anthranilate. Position 90 (Ser90) interacts with Mg(2+). Residue Asn109 coordinates anthranilate. Arg164 contributes to the anthranilate binding site. Mg(2+) contacts are provided by Asp223 and Glu224.

The protein belongs to the anthranilate phosphoribosyltransferase family. As to quaternary structure, homodimer. Requires Mg(2+) as cofactor.

It catalyses the reaction N-(5-phospho-beta-D-ribosyl)anthranilate + diphosphate = 5-phospho-alpha-D-ribose 1-diphosphate + anthranilate. Its pathway is amino-acid biosynthesis; L-tryptophan biosynthesis; L-tryptophan from chorismate: step 2/5. In terms of biological role, catalyzes the transfer of the phosphoribosyl group of 5-phosphorylribose-1-pyrophosphate (PRPP) to anthranilate to yield N-(5'-phosphoribosyl)-anthranilate (PRA). This chain is Anthranilate phosphoribosyltransferase, found in Chlamydia caviae (strain ATCC VR-813 / DSM 19441 / 03DC25 / GPIC) (Chlamydophila caviae).